The following is a 515-amino-acid chain: Protein aaim-1 (515 aa).

The first 16 residues, 1-16 (MRLLFFFSILYTASLC), serve as a signal peptide directing secretion. Asparagine 46 and asparagine 127 each carry an N-linked (GlcNAc...) asparagine glycan. A disordered region spans residues 248–267 (RRTDPNSKFKPRPTTSQSNG). Residue asparagine 447 is glycosylated (N-linked (GlcNAc...) asparagine).

Expressed in the terminal bulb of the pharynx and the posterior of the intestine (at protein level). Expressed by intestinal cells and secreted into the intestinal lumen (at protein level).

It is found in the secreted. Functionally, plays a role in promoting resistance to bacterial pathogens such as P.aeruginosa by inhibiting bacterial intestinal colonization. In terms of biological role, (Microbial infection) Promotes infection by microsporidian pathogens such as N.parisii in the early larval stages of development. Involved in ensuring the proper orientation and location of the spore proteins of N.parisii during intestinal cell invasion. The sequence is that of Protein aaim-1 from Caenorhabditis elegans.